The chain runs to 217 residues: tRNA (guanine-N(7)-)-methyltransferase (217 aa).

Positions 45, 70, 97, and 119 each coordinate S-adenosyl-L-methionine. The active site involves aspartate 119. Lysine 123 lines the substrate pocket. Residues arginine 125 to arginine 130 are interaction with RNA. Substrate contacts are provided by residues aspartate 155 and threonine 195 to glutamate 198.

It belongs to the class I-like SAM-binding methyltransferase superfamily. TrmB family.

The catalysed reaction is guanosine(46) in tRNA + S-adenosyl-L-methionine = N(7)-methylguanosine(46) in tRNA + S-adenosyl-L-homocysteine. It participates in tRNA modification; N(7)-methylguanine-tRNA biosynthesis. Its function is as follows. Catalyzes the formation of N(7)-methylguanine at position 46 (m7G46) in tRNA. This Lactobacillus helveticus (strain DPC 4571) protein is tRNA (guanine-N(7)-)-methyltransferase.